A 908-amino-acid polypeptide reads, in one-letter code: Protein translocase subunit SecA (908 aa).

Residues glutamine 87, 105–109, and aspartate 512 contribute to the ATP site; that span reads GEGKT. Residues 876 to 908 form a disordered region; sequence QAPMIRDGEKVGRNDPCPCGSGRKYKQCHGKLS. Zn(2+)-binding residues include cysteine 892, cysteine 894, cysteine 903, and histidine 904. The span at 898-908 shows a compositional bias: basic residues; the sequence is RKYKQCHGKLS.

The protein belongs to the SecA family. Monomer and homodimer. Part of the essential Sec protein translocation apparatus which comprises SecA, SecYEG and auxiliary proteins SecDF-YajC and YidC. The cofactor is Zn(2+).

The protein localises to the cell inner membrane. It localises to the cytoplasm. The catalysed reaction is ATP + H2O + cellular proteinSide 1 = ADP + phosphate + cellular proteinSide 2.. In terms of biological role, part of the Sec protein translocase complex. Interacts with the SecYEG preprotein conducting channel. Has a central role in coupling the hydrolysis of ATP to the transfer of proteins into and across the cell membrane, serving both as a receptor for the preprotein-SecB complex and as an ATP-driven molecular motor driving the stepwise translocation of polypeptide chains across the membrane. This Shewanella baltica (strain OS185) protein is Protein translocase subunit SecA.